A 134-amino-acid chain; its full sequence is MAEVVGYYGTGRRKTAVARVYLRPGEGKVKVNGKEYESLNDYFKNPAWTKHAIEPLEVTNTLGKFDLVIRVNGGGLSGQSGAVRLGIARALLQYDQNLRPVLKKYKMLTRDPREVERKKYGLKKARRAPQFSKR.

Positions 113 to 134 are disordered; that stretch reads REVERKKYGLKKARRAPQFSKR. The segment covering 120–134 has biased composition (basic residues); sequence YGLKKARRAPQFSKR.

It belongs to the universal ribosomal protein uS9 family.

This chain is Small ribosomal subunit protein uS9 (rpsI), found in Thermotoga maritima (strain ATCC 43589 / DSM 3109 / JCM 10099 / NBRC 100826 / MSB8).